Reading from the N-terminus, the 269-residue chain is Integral membrane protein 2C (269 aa).

Position 39 is a phosphothreonine (T39). Residues 57-77 (VGGVCYLSMGMVVLLMGLVFA) form a helical; Signal-anchor for type II membrane protein membrane-spanning segment. Residues 138–232 (FGGGDPADII…LCNGKDTYRL (95 aa)) form the BRICHOS domain. A disulfide bridge links C165 with C224. The N-linked (GlcNAc...) asparagine glycan is linked to N171.

This sequence belongs to the ITM2 family. Interacts with BACE1. Interacts with APP. Interacts with STMN2. Post-translationally, type I membrane-bound, as well as soluble, furin has a pre-eminent role in ITM2C proteolytic processing. PCSK7 and PCSK5 may also be involved although to a lesser extent. The soluble form of PCSK7 is incapable of processing ITM2C. Fails to undergo shedding by ADAM10 and intramembrane cleavage by SPPL2B.

The protein resides in the lysosome membrane. It is found in the cell membrane. Negative regulator of amyloid-beta peptide production. May inhibit the processing of APP by blocking its access to alpha- and beta-secretase. Binding to the beta-secretase-cleaved APP C-terminal fragment is negligible, suggesting that ITM2C is a poor gamma-secretase cleavage inhibitor. May play a role in TNF-induced cell death and neuronal differentiation. The protein is Integral membrane protein 2C (Itm2c) of Rattus norvegicus (Rat).